The sequence spans 775 residues: Ubiquitin carboxyl-terminal hydrolase 14 (775 aa).

The UBP-type 1; degenerate zinc-finger motif lies at 1-108 (MSCPHLTETN…EDLYDYFYVP (108 aa)). Residues Cys25, Cys28, Cys41, Cys44, Cys49, His56, His60, His66, Cys153, His155, Cys174, Cys177, Cys186, Cys189, Cys194, His207, His211, His217, Cys236, and Cys239 each contribute to the Zn(2+) site. The UBP-type 2 zinc finger occupies 151–259 (TTCDHIINLP…THMLNFGIDI (109 aa)). Residues 300 to 774 (TGLKNLGNSC…TGYVYLFERL (475 aa)) enclose the USP domain. The Nucleophile role is filled by Cys309. Ser456 carries the phosphoserine modification. UBA domains are found at residues 576-617 (EWNQ…LFEH) and 639-679 (SVSE…ILNH). The active-site Proton acceptor is His730.

It belongs to the peptidase C19 family.

It carries out the reaction Thiol-dependent hydrolysis of ester, thioester, amide, peptide and isopeptide bonds formed by the C-terminal Gly of ubiquitin (a 76-residue protein attached to proteins as an intracellular targeting signal).. The polypeptide is Ubiquitin carboxyl-terminal hydrolase 14 (ubp14) (Schizosaccharomyces pombe (strain 972 / ATCC 24843) (Fission yeast)).